We begin with the raw amino-acid sequence, 513 residues long: Probable helicase MJ1565 (513 aa).

ATP contacts are provided by residues Arg151, 160–165, and 467–468; these read GMGKSN and KV.

It belongs to the HerA family.

It catalyses the reaction Couples ATP hydrolysis with the unwinding of duplex DNA at the replication fork by translocating in the 5'-3' direction. This creates two antiparallel DNA single strands (ssDNA). The leading ssDNA polymer is the template for DNA polymerase III holoenzyme which synthesizes a continuous strand.. The catalysed reaction is ATP + H2O = ADP + phosphate + H(+). It carries out the reaction Couples ATP hydrolysis with the unwinding of duplex DNA by translocating in the 3'-5' direction.. Its function is as follows. A probably bidirectional DNA helicase. The polypeptide is Probable helicase MJ1565 (Methanocaldococcus jannaschii (strain ATCC 43067 / DSM 2661 / JAL-1 / JCM 10045 / NBRC 100440) (Methanococcus jannaschii)).